An 81-amino-acid polypeptide reads, in one-letter code: Putative membrane protein insertion efficiency factor 1 (81 aa).

It belongs to the UPF0161 family.

It localises to the cell membrane. Its function is as follows. Could be involved in insertion of integral membrane proteins into the membrane. This Bacillus licheniformis (strain ATCC 14580 / DSM 13 / JCM 2505 / CCUG 7422 / NBRC 12200 / NCIMB 9375 / NCTC 10341 / NRRL NRS-1264 / Gibson 46) protein is Putative membrane protein insertion efficiency factor 1.